The primary structure comprises 656 residues: Protein NO VEIN-LIKE (656 aa).

Residues aspartate 283–alanine 375 are disordered. Acidic residues predominate over residues glutamate 299–valine 308. Basic and acidic residues predominate over residues glutamate 342–lysine 353. Over residues leucine 354 to isoleucine 371 the composition is skewed to basic residues.

The protein is Protein NO VEIN-LIKE of Arabidopsis thaliana (Mouse-ear cress).